Here is a 394-residue protein sequence, read N- to C-terminus: 8-amino-7-oxononanoate synthase (394 aa).

Arg21 is a substrate binding site. Gly112 to Tyr113 serves as a coordination point for pyridoxal 5'-phosphate. Position 137 (His137) interacts with substrate. Pyridoxal 5'-phosphate contacts are provided by Ser183, His211, and Thr239. Lys242 is modified (N6-(pyridoxal phosphate)lysine). Substrate is bound at residue Thr358.

This sequence belongs to the class-II pyridoxal-phosphate-dependent aminotransferase family. BioF subfamily. As to quaternary structure, homodimer. Requires pyridoxal 5'-phosphate as cofactor.

It carries out the reaction 6-carboxyhexanoyl-[ACP] + L-alanine + H(+) = (8S)-8-amino-7-oxononanoate + holo-[ACP] + CO2. The protein operates within cofactor biosynthesis; biotin biosynthesis. Its function is as follows. Catalyzes the decarboxylative condensation of pimeloyl-[acyl-carrier protein] and L-alanine to produce 8-amino-7-oxononanoate (AON), [acyl-carrier protein], and carbon dioxide. This is 8-amino-7-oxononanoate synthase from Burkholderia thailandensis (strain ATCC 700388 / DSM 13276 / CCUG 48851 / CIP 106301 / E264).